Reading from the N-terminus, the 95-residue chain is uncharacterized protein (95 aa).

Positions 1–73 (MAHFKDDLQT…AQQPSMRTEL (73 aa)) are disordered. Polar residues-rich tracts occupy residues 42–52 (SNHSPSVQESP) and 62–73 (GSAQQPSMRTEL).

This is an uncharacterized protein from Homo sapiens (Human).